The primary structure comprises 160 residues: MANKKEEPGHSPLVNKKAKFNFELVSFIEAGIVLSGSEVKSLREKKGNLTDAFAKIKNGEVFLENFSITPYKNGGYVNHPEIRPRKLLLHKKEIEKLERQVKEKGLVLVATKVYFKNNLRVKVEIAVGKPKKIHDKRDDMQKKDAQQEIARALKSSNRYE.

Residues 132 to 160 are disordered; that stretch reads KIHDKRDDMQKKDAQQEIARALKSSNRYE. Over residues 135–146 the composition is skewed to basic and acidic residues; it reads DKRDDMQKKDAQ.

It belongs to the SmpB family.

It localises to the cytoplasm. In terms of biological role, required for rescue of stalled ribosomes mediated by trans-translation. Binds to transfer-messenger RNA (tmRNA), required for stable association of tmRNA with ribosomes. tmRNA and SmpB together mimic tRNA shape, replacing the anticodon stem-loop with SmpB. tmRNA is encoded by the ssrA gene; the 2 termini fold to resemble tRNA(Ala) and it encodes a 'tag peptide', a short internal open reading frame. During trans-translation Ala-aminoacylated tmRNA acts like a tRNA, entering the A-site of stalled ribosomes, displacing the stalled mRNA. The ribosome then switches to translate the ORF on the tmRNA; the nascent peptide is terminated with the 'tag peptide' encoded by the tmRNA and targeted for degradation. The ribosome is freed to recommence translation, which seems to be the essential function of trans-translation. This chain is SsrA-binding protein, found in Leptospira borgpetersenii serovar Hardjo-bovis (strain JB197).